The sequence spans 614 residues: Type VII secretion system protein EssD (614 aa).

Residues 417–445 (QNHVTHGPKDSMVRSEGKHSISSHEMNSS) are disordered. Positions 423–435 (GPKDSMVRSEGKH) are enriched in basic and acidic residues.

Belongs to the EssD family. In terms of assembly, interacts (via C-terminal) with EssG; this interaction blocks EssD activity. Interacts with EssE.

The protein resides in the secreted. It is found in the cell membrane. Component of the type VII secretion system (Ess). Plays a role in Ess secretion during infection. Required for the efficient secretion of EsxA. Required for abscess formation and staphylococcal persistence in host tissues. Possesses a toxic DNase activity that is modulated by EsaG by forming a nuclease toxin-antitoxin pair. This nuclease toxin targets competitor bacteria. The sequence is that of Type VII secretion system protein EssD from Staphylococcus aureus (strain USA300).